The primary structure comprises 284 residues: Bifunctional protein FolD (284 aa).

NADP(+) is bound by residues 166–168 (GRS) and serine 191.

The protein belongs to the tetrahydrofolate dehydrogenase/cyclohydrolase family. Homodimer.

The enzyme catalyses (6R)-5,10-methylene-5,6,7,8-tetrahydrofolate + NADP(+) = (6R)-5,10-methenyltetrahydrofolate + NADPH. The catalysed reaction is (6R)-5,10-methenyltetrahydrofolate + H2O = (6R)-10-formyltetrahydrofolate + H(+). The protein operates within one-carbon metabolism; tetrahydrofolate interconversion. Its function is as follows. Catalyzes the oxidation of 5,10-methylenetetrahydrofolate to 5,10-methenyltetrahydrofolate and then the hydrolysis of 5,10-methenyltetrahydrofolate to 10-formyltetrahydrofolate. The chain is Bifunctional protein FolD from Delftia acidovorans (strain DSM 14801 / SPH-1).